A 276-amino-acid chain; its full sequence is Odontogenic ameloblast-associated protein (276 aa).

The signal sequence occupies residues 1 to 15 (MRTLILLGILGATMS). T101, T113, and T117 each carry an O-linked (GalNAc...) threonine glycan. Residues 125-127 (MPS) form an interaction with ARHGEF5 region. A glycan (O-linked (GalNAc...) serine) is linked at S246. T247, T248, and T252 each carry an O-linked (GalNAc...) threonine glycan. An O-linked (GalNAc...) serine glycan is attached at S253. T254, T258, T260, and T270 each carry an O-linked (GalNAc...) threonine glycan. S272 is a glycosylation site (O-linked (GalNAc...) serine).

The protein belongs to the ODAM family. Interacts (via C-terminus) with ARHGEF5. Post-translationally, O-glycosylated.

Its subcellular location is the secreted. The protein resides in the cytoplasm. The protein localises to the nucleus. Functionally, tooth-associated epithelia protein that probably plays a role in odontogenesis, the complex process that results in the initiation and generation of the tooth. May be incorporated in the enamel matrix at the end of mineralization process. Involved in the induction of RHOA activity via interaction with ARHGEF and expression of downstream factors such as ROCK. Plays a role in attachment of the junctional epithelium to the tooth surface. The sequence is that of Odontogenic ameloblast-associated protein (ODAM) from Sus scrofa (Pig).